Consider the following 102-residue polypeptide: Bowman-Birk type wound-induced proteinase inhibitor WIP1 (102 aa).

The N-terminal stretch at 1–15 (MKSSPHLVLILCLQA) is a signal peptide. 5 disulfide bridges follow: cysteine 46–cysteine 102, cysteine 47–cysteine 60, cysteine 50–cysteine 98, cysteine 67–cysteine 74, and cysteine 71–cysteine 90.

This sequence belongs to the Bowman-Birk serine protease inhibitor family.

The protein is Bowman-Birk type wound-induced proteinase inhibitor WIP1 (WIP1) of Zea mays (Maize).